The following is a 347-amino-acid chain: Fatty acid elongase 2 (347 aa).

Topologically, residues 1–62 (MNSLVTQYAA…PSEFQFIAGE (62 aa)) are lumenal. A glycan (N-linked (GlcNAc...) asparagine) is linked at N32. The chain crosses the membrane as a helical span at residues 63–83 (LPLSTLPPVLYAITAYYVIIF). Residues 84–96 (GGRFLLSKSKPFK) lie on the Cytoplasmic side of the membrane. A helical transmembrane segment spans residues 97–119 (LNGLFQLHNLVLTSLSLTLLLLM). Residues 120–122 (VEQ) are Lumenal-facing. A helical membrane pass occupies residues 123–142 (LVPIIVQHGLYFAICNIGAW). The Cytoplasmic segment spans residues 143 to 146 (TQPL). A helical transmembrane segment spans residues 147-169 (VTLYYMNYIVKFIEFIDTFFLVL). Over 170–200 (KHKKLTFLHTYHHGATALLCYTQLMGTTSIS) the chain is Lumenal. The HxxHH motif signature appears at 178 to 182 (HTYHH). The helical transmembrane segment at 201-221 (WVPISLNLGVHVVMYWYYFLA) threads the bilayer. Residues 222–231 (ARGIRVWWKE) are Cytoplasmic-facing. A helical transmembrane segment spans residues 232–254 (WVTRFQIIQFVLDIGFIYFAVYQ). The Lumenal segment spans residues 255-275 (KAVHLYFPILPHCGDCVGSTT). Residues 276 to 296 (ATFAGCAIISSYLVLFISFYI) form a helical membrane-spanning segment. At 297-347 (NVYKRKGTKTSRVVKRAHGGVAAKVNEYVNVDLKNVPTPSPSPKPQHRRKR) the chain is on the cytoplasmic side. Position 334 is a phosphothreonine (T334). Residues S336 and S338 each carry the phosphoserine modification. Residues 344-347 (RRKR) carry the Di-lysine-like motif motif.

Belongs to the ELO family.

It is found in the endoplasmic reticulum membrane. The catalysed reaction is a very-long-chain acyl-CoA + malonyl-CoA + H(+) = a very-long-chain 3-oxoacyl-CoA + CO2 + CoA. It catalyses the reaction octadecanoyl-CoA + malonyl-CoA + H(+) = 3-oxoeicosanoyl-CoA + CO2 + CoA. It carries out the reaction hexadecanoyl-CoA + malonyl-CoA + H(+) = 3-oxooctadecanoyl-CoA + CO2 + CoA. The enzyme catalyses eicosanoyl-CoA + malonyl-CoA + H(+) = 3-oxodocosanoyl-CoA + CO2 + CoA. The catalysed reaction is docosanoyl-CoA + malonyl-CoA + H(+) = 3-oxotetracosanoyl-CoA + CO2 + CoA. In terms of biological role, component of a microsomal membrane-bound long-chain fatty acid elongation system, which produces the 20-26-carbon very long-chain fatty acids (VLCFA) from long-chain fatty acid precursors and is involved ceramide and inositol sphingolipid biosynthesis. Component of elongase II, which elongates 16-18 carbon fatty acyl-CoAs such as palmitoyl-CoA and stearoyl-CoA to 20-22-carbon fatty acids by incorporation of malonyl-CoA. Involved in the synthesis of 1,3-beta-glucan. The enzymes active site faces the cytosol, whereas VLCFA length is determined by a lysine near the luminal end of transmembrane helix 6. Plays an important role in lipotoxic cell death induced by oleic acid through maintaining a balanced fatty acid composition in thr plasma membrane. The sequence is that of Fatty acid elongase 2 from Saccharomyces cerevisiae (strain ATCC 204508 / S288c) (Baker's yeast).